The chain runs to 51 residues: Defensin-like protein 1 (51 aa).

Gln1 is subject to Pyrrolidone carboxylic acid. Intrachain disulfides connect Cys4/Cys51, Cys15/Cys36, Cys21/Cys45, and Cys25/Cys47.

In terms of assembly, forms oligomers in its native state.

In terms of biological role, possesses antifungal activity sensitive to inorganic cations. The polypeptide is Defensin-like protein 1 (Sinapis alba (White mustard)).